The sequence spans 105 residues: UPF0473 protein SAK_2028 (105 aa).

It belongs to the UPF0473 family.

The chain is UPF0473 protein SAK_2028 from Streptococcus agalactiae serotype Ia (strain ATCC 27591 / A909 / CDC SS700).